The following is a 437-amino-acid chain: Tryptophan--tRNA ligase (437 aa).

Residues Pro-74–His-82 carry the 'HIGH' region motif. The short motif at Lys-321 to Ser-325 is the 'KMSKS' region element.

The protein belongs to the class-I aminoacyl-tRNA synthetase family.

It is found in the cytoplasm. It catalyses the reaction tRNA(Trp) + L-tryptophan + ATP = L-tryptophyl-tRNA(Trp) + AMP + diphosphate + H(+). This chain is Tryptophan--tRNA ligase, found in Methanosarcina acetivorans (strain ATCC 35395 / DSM 2834 / JCM 12185 / C2A).